Here is a 141-residue protein sequence, read N- to C-terminus: Hemoglobin subunit alpha (141 aa).

The Globin domain occupies 1–141 (VLSANDKSNV…VSTVLTSKYR (141 aa)). The residue at position 3 (Ser3) is a Phosphoserine. Residues Lys7 and Lys11 each carry the N6-succinyllysine modification. N6-acetyllysine; alternate is present on Lys16. Lys16 is subject to N6-succinyllysine; alternate. Residue Tyr24 is modified to Phosphotyrosine. Ser35 bears the Phosphoserine mark. Lys40 bears the N6-succinyllysine mark. Ser49 carries the post-translational modification Phosphoserine. An O2-binding site is contributed by His58. His87 lines the heme b pocket. Ser102 carries the phosphoserine modification. Thr108 is modified (phosphothreonine). Ser124 bears the Phosphoserine mark. A phosphothreonine mark is found at Thr134 and Thr137. Position 138 is a phosphoserine (Ser138).

The protein belongs to the globin family. In terms of assembly, heterotetramer of two alpha chains and two beta chains. In terms of tissue distribution, red blood cells.

Functionally, involved in oxygen transport from the lung to the various peripheral tissues. In terms of biological role, hemopressin acts as an antagonist peptide of the cannabinoid receptor CNR1. Hemopressin-binding efficiently blocks cannabinoid receptor CNR1 and subsequent signaling. The chain is Hemoglobin subunit alpha (HBA) from Hippopotamus amphibius (Hippopotamus).